The following is a 51-amino-acid chain: MSSIKPAAKKLRLAKAGKQNRRVPMFVIAKTGGKVRTHTKMRNWRRNTLKK.

Belongs to the eukaryotic ribosomal protein eL39 family.

The chain is Large ribosomal subunit protein eL39 from Methanococcus aeolicus (strain ATCC BAA-1280 / DSM 17508 / OCM 812 / Nankai-3).